Reading from the N-terminus, the 248-residue chain is 1-(5-phosphoribosyl)-5-[(5-phosphoribosylamino)methylideneamino] imidazole-4-carboxamide isomerase (248 aa).

Asp8 (proton acceptor) is an active-site residue. The active-site Proton donor is Asp129.

The protein belongs to the HisA/HisF family.

It localises to the cytoplasm. It carries out the reaction 1-(5-phospho-beta-D-ribosyl)-5-[(5-phospho-beta-D-ribosylamino)methylideneamino]imidazole-4-carboxamide = 5-[(5-phospho-1-deoxy-D-ribulos-1-ylimino)methylamino]-1-(5-phospho-beta-D-ribosyl)imidazole-4-carboxamide. It functions in the pathway amino-acid biosynthesis; L-histidine biosynthesis; L-histidine from 5-phospho-alpha-D-ribose 1-diphosphate: step 4/9. The sequence is that of 1-(5-phosphoribosyl)-5-[(5-phosphoribosylamino)methylideneamino] imidazole-4-carboxamide isomerase from Rhizobium johnstonii (strain DSM 114642 / LMG 32736 / 3841) (Rhizobium leguminosarum bv. viciae).